A 424-amino-acid chain; its full sequence is Hemagglutinin-esterase (424 aa).

2 signal peptides span residues 1–16 (MFLL…IIGS) and 1–18 (MFLL…GSLG). The segment at 7 to 127 (FVLVSCIIGS…SNDIWMQNKG (121 aa)) is esterase domain 1. Topologically, residues 17-392 (LGFDNPPTNV…PICVYDPLPL (376 aa)) are virion surface. Ser-40 acts as the Nucleophile in catalysis. A disulfide bond links Cys-44 and Cys-65. N-linked (GlcNAc...) asparagine; by host glycans are attached at residues Asn-54, Asn-89, Asn-153, Asn-236, and Asn-301. Intrachain disulfides connect Cys-113–Cys-162, Cys-197–Cys-276, and Cys-205–Cys-249. The tract at residues 128–266 (LFYTQVYKNM…GNYLAISNEL (139 aa)) is receptor binding. Residues 267-379 (LLTVPTKAIC…RCPTAADINT (113 aa)) form an esterase domain 2 region. Cys-307 and Cys-312 form a disulfide bridge. Asn-316 carries N-linked (GlcNAc...) asparagine; by host glycosylation. Active-site charge relay system residues include Asp-326 and His-329. A disulfide bridge links Cys-347 with Cys-371. Asn-358 is a glycosylation site (N-linked (GlcNAc...) asparagine; by host). A helical membrane pass occupies residues 393–413 (ILLGILLGVAVIIIVVLLLYF). Residues 414-424 (MVDNGTRLHDA) are Intravirion-facing. Asn-417 is a glycosylation site (N-linked (GlcNAc...) asparagine; by host).

Belongs to the influenza type C/coronaviruses hemagglutinin-esterase family. In terms of assembly, homodimer; disulfide-linked. Forms a complex with the M protein in the pre-Golgi. Associates then with S-M complex to form a ternary complex S-M-HE. N-glycosylated in the host RER.

The protein localises to the virion membrane. The protein resides in the host cell membrane. The catalysed reaction is N-acetyl-9-O-acetylneuraminate + H2O = N-acetylneuraminate + acetate + H(+). The enzyme catalyses N-acetyl-4-O-acetylneuraminate + H2O = N-acetylneuraminate + acetate + H(+). Its function is as follows. Structural protein that makes short spikes at the surface of the virus. Contains receptor binding and receptor-destroying activities. Mediates de-O-acetylation of N-acetyl-4-O-acetylneuraminic acid, which is probably the receptor determinant recognized by the virus on the surface of erythrocytes and susceptible cells. This receptor-destroying activity is important for virus release as it probably helps preventing self-aggregation and ensures the efficient spread of the progeny virus from cell to cell. May serve as a secondary viral attachment protein for initiating infection, the spike protein being the major one. May become a target for both the humoral and the cellular branches of the immune system. The sequence is that of Hemagglutinin-esterase from Bos taurus (Bovine).